The following is a 175-amino-acid chain: CDP-archaeol synthase (175 aa).

The next 4 helical transmembrane spans lie at 41–61 (GLFS…WLSM), 78–98 (YASA…GDMF), 122–142 (FVVG…VSNF), and 150–170 (VLIM…FIGV).

Belongs to the CDP-archaeol synthase family. Mg(2+) serves as cofactor.

Its subcellular location is the cell membrane. It carries out the reaction 2,3-bis-O-(geranylgeranyl)-sn-glycerol 1-phosphate + CTP + H(+) = CDP-2,3-bis-O-(geranylgeranyl)-sn-glycerol + diphosphate. It participates in membrane lipid metabolism; glycerophospholipid metabolism. Catalyzes the formation of CDP-2,3-bis-(O-geranylgeranyl)-sn-glycerol (CDP-archaeol) from 2,3-bis-(O-geranylgeranyl)-sn-glycerol 1-phosphate (DGGGP) and CTP. This reaction is the third ether-bond-formation step in the biosynthesis of archaeal membrane lipids. In Methanosarcina acetivorans (strain ATCC 35395 / DSM 2834 / JCM 12185 / C2A), this protein is CDP-archaeol synthase.